A 355-amino-acid polypeptide reads, in one-letter code: 3-dehydroquinate synthase (355 aa).

Residues 71–76 (EGEERK), 105–109 (GVVGD), 129–130 (TS), Lys-142, and Lys-151 contribute to the NAD(+) site. Glu-184, His-246, and His-263 together coordinate Zn(2+).

Belongs to the sugar phosphate cyclases superfamily. Dehydroquinate synthase family. NAD(+) is required as a cofactor. It depends on Co(2+) as a cofactor. The cofactor is Zn(2+).

The protein localises to the cytoplasm. It catalyses the reaction 7-phospho-2-dehydro-3-deoxy-D-arabino-heptonate = 3-dehydroquinate + phosphate. Its pathway is metabolic intermediate biosynthesis; chorismate biosynthesis; chorismate from D-erythrose 4-phosphate and phosphoenolpyruvate: step 2/7. In terms of biological role, catalyzes the conversion of 3-deoxy-D-arabino-heptulosonate 7-phosphate (DAHP) to dehydroquinate (DHQ). The sequence is that of 3-dehydroquinate synthase from Streptococcus pneumoniae (strain ATCC BAA-255 / R6).